Reading from the N-terminus, the 150-residue chain is UPF0178 protein Bpet3884 (150 aa).

Belongs to the UPF0178 family.

This Bordetella petrii (strain ATCC BAA-461 / DSM 12804 / CCUG 43448) protein is UPF0178 protein Bpet3884.